The primary structure comprises 394 residues: Protein LAX PANICLE 2 (394 aa).

A disordered region spans residues 1 to 193; it reads MVPARSLAHP…PTPRHHHHDV (193 aa). Basic residues predominate over residues 8–20; the sequence is AHPHPHLVRRRRD. Over residues 60–84 the composition is skewed to basic and acidic residues; the sequence is QHDPPKQPPPREADDDHHRIQEREP. 3 stretches are compositionally biased toward low complexity: residues 90-101, 119-131, and 146-155; these read TTTRNQRLQLQL, GTSG…SSSN, and GPASPGASAG. The span at 170–185 shows a compositional bias: pro residues; it reads APQPPTPTPTPTPTPT.

As to quaternary structure, interacts with LAX1.

Its subcellular location is the nucleus. In terms of biological role, involved in the regulation of shoot branching by controlling axillary meristem (AM) formation. Functions in association with LAX1 to regulate the process of AM formation. Possesses transactivation activity in yeast. The polypeptide is Protein LAX PANICLE 2 (Oryza sativa subsp. japonica (Rice)).